The primary structure comprises 201 residues: MAENLANHLLDEMIEALSSLPGIGRKSAFRISFHLLRLEQGLFNQFIHQLTDTKNKIKFCKRCGSYAETEICEICVSEKRDSHTFCVVEQPEDIFFIENTREFQGKYHVLNGVISPLEGIGPRDLRIKELLERIEPEQVKEVLIATNPTLEGDATADYLANQLKPISVNVTRIAYGITVGGSIELADQYTLGRAIRSRLQL.

The segment at 60–75 (CKRCGSYAETEICEIC) adopts a C4-type zinc-finger fold. Residues 83 to 178 (HTFCVVEQPE…NVTRIAYGIT (96 aa)) enclose the Toprim domain.

It belongs to the RecR family.

Its function is as follows. May play a role in DNA repair. It seems to be involved in an RecBC-independent recombinational process of DNA repair. It may act with RecF and RecO. The protein is Recombination protein RecR of Leptospira interrogans serogroup Icterohaemorrhagiae serovar copenhageni (strain Fiocruz L1-130).